The sequence spans 285 residues: UPF0014 membrane protein STAR2 (285 aa).

The next 7 helical transmembrane spans lie at 30–50, 64–84, 88–108, 119–139, 148–168, 203–225, and 240–262; these read FLVG…AVAL, YAMA…QFIF, SAAW…YTAG, HIAA…LVAL, YIIP…GVTM, SLVI…ALPG, and AIQL…SILS.

This sequence belongs to the UPF0014 family. Interacts with STAR2. Expressed in roots.

The protein resides in the membrane. In terms of biological role, associates with STAR2 to form a functional transmembrane ABC transporter required for detoxification of aluminum (Al) in roots. Can specifically transport UDP-glucose. This Oryza sativa subsp. japonica (Rice) protein is UPF0014 membrane protein STAR2.